Consider the following 247-residue polypeptide: ATP synthase subunit a, chloroplastic (247 aa).

Transmembrane regions (helical) follow at residues 38–58 (QVLITSWVVIAILLGSAALAV), 95–115 (VPFIGTMFLFIFVSNWSGALL), 134–154 (INTTVALALLTSVAYFYAGLT), 199–219 (LVVVVLVSLVPSVVPIPVMFL), and 220–240 (GLFTSGIQALIFATLAAAYIG).

It belongs to the ATPase A chain family. As to quaternary structure, F-type ATPases have 2 components, CF(1) - the catalytic core - and CF(0) - the membrane proton channel. CF(1) has five subunits: alpha(3), beta(3), gamma(1), delta(1), epsilon(1). CF(0) has four main subunits: a, b, b' and c.

The protein localises to the plastid. The protein resides in the chloroplast thylakoid membrane. Its function is as follows. Key component of the proton channel; it plays a direct role in the translocation of protons across the membrane. In Helianthus annuus (Common sunflower), this protein is ATP synthase subunit a, chloroplastic.